A 1318-amino-acid polypeptide reads, in one-letter code: DNA-directed RNA polymerase subunit beta' (1318 aa).

Positions 221, 295, 302, and 305 each coordinate Zn(2+).

Belongs to the RNA polymerase beta' chain family. RpoC2 subfamily. In terms of assembly, in cyanobacteria the RNAP catalytic core is composed of 2 alpha, 1 beta, 1 beta', 1 gamma and 1 omega subunit. When a sigma factor is associated with the core the holoenzyme is formed, which can initiate transcription. It depends on Zn(2+) as a cofactor.

The catalysed reaction is RNA(n) + a ribonucleoside 5'-triphosphate = RNA(n+1) + diphosphate. Its function is as follows. DNA-dependent RNA polymerase catalyzes the transcription of DNA into RNA using the four ribonucleoside triphosphates as substrates. The chain is DNA-directed RNA polymerase subunit beta' from Synechococcus elongatus (strain ATCC 33912 / PCC 7942 / FACHB-805) (Anacystis nidulans R2).